Reading from the N-terminus, the 360-residue chain is Isopentenyl-diphosphate delta-isomerase (360 aa).

12–13 contacts substrate; that stretch reads RK. FMN is bound by residues Ser70, 71-73, Ser101, and Asn130; that span reads SMT. A substrate-binding site is contributed by 101-103; that stretch reads SMR. Gln165 lines the substrate pocket. Glu166 is a Mg(2+) binding site. FMN-binding positions include Lys197, 288-290, and 309-310; these read GIR and AG.

It belongs to the IPP isomerase type 2 family. In terms of assembly, homooctamer. Dimer of tetramers. FMN serves as cofactor. It depends on NADPH as a cofactor. The cofactor is Mg(2+).

It is found in the cytoplasm. The catalysed reaction is isopentenyl diphosphate = dimethylallyl diphosphate. Involved in the biosynthesis of isoprenoids. Catalyzes the 1,3-allylic rearrangement of the homoallylic substrate isopentenyl (IPP) to its allylic isomer, dimethylallyl diphosphate (DMAPP). This chain is Isopentenyl-diphosphate delta-isomerase, found in Chlorobium limicola (strain DSM 245 / NBRC 103803 / 6330).